The chain runs to 211 residues: Protein N-terminal glutamine amidohydrolase (211 aa).

Catalysis depends on residues Cys24, His78, and Asp94.

This sequence belongs to the NTAQ1 family. In terms of assembly, monomer.

It carries out the reaction N-terminal L-glutaminyl-[protein] + H2O = N-terminal L-glutamyl-[protein] + NH4(+). Its function is as follows. Mediates the side-chain deamidation of N-terminal glutamine residues to glutamate, an important step in N-end rule pathway of protein degradation. Conversion of the resulting N-terminal glutamine to glutamate renders the protein susceptible to arginylation, polyubiquitination and degradation as specified by the N-end rule. Does not act on substrates with internal or C-terminal glutamine and does not act on non-glutamine residues in any position. This is Protein N-terminal glutamine amidohydrolase (tun) from Anopheles gambiae (African malaria mosquito).